The following is a 792-amino-acid chain: LPS-assembly protein LptD (792 aa).

The signal sequence occupies residues 1–22; it reads MYRVLRLLPLPLSVAISLSALA.

It belongs to the LptD family. Component of the lipopolysaccharide transport and assembly complex. Interacts with LptE and LptA.

It is found in the cell outer membrane. Functionally, together with LptE, is involved in the assembly of lipopolysaccharide (LPS) at the surface of the outer membrane. In Xylella fastidiosa (strain 9a5c), this protein is LPS-assembly protein LptD.